A 492-amino-acid chain; its full sequence is Endoglycoceramidase I (492 aa).

A signal peptide spans 1-14 (MRKTVVAFAAAIAA). Cys-15 carries N-palmitoyl cysteine lipidation. Residue Cys-15 is the site of S-diacylglycerol cysteine attachment. Substrate-binding positions include Lys-61, Asp-62, 131–133 (HQD), and 213–214 (NE). The Proton donor role is filled by Glu-214. Cys-224 and Cys-229 are disulfide-bonded. Substrate contacts are provided by Asn-265, Gln-298, and Tyr-302. A disulfide bond links Cys-294 and Cys-313. Glu-339 (nucleophile) is an active-site residue. Trp-365 is a substrate binding site. The tract at residues 467-492 (NRPGSAGAEVPDGPIETSSSGSSGSS) is disordered.

It belongs to the glycosyl hydrolase 5 (cellulase A) family.

The protein resides in the secreted. The protein localises to the membrane. The enzyme catalyses an oligoglycosyl-(1-&gt;4)-beta-D-glucosyl-(1&lt;-&gt;1)-ceramide + H2O = an oligoglycosyl-(1-&gt;4)-D-glucose + an N-acyl-sphingoid base. It carries out the reaction a ganglioside GM3 + H2O = N-acetyl-alpha-neuraminosyl-(2-&gt;3)-beta-D-galactosyl-(1-&gt;4)-D-glucose + an N-acyl-sphingoid base. It catalyses the reaction a ganglioside GM1 + H2O = beta-D-Gal-(1-&gt;3)-beta-D-GalNAc-(1-&gt;4)-[alpha-Neu5Ac-(2-&gt;3)]-beta-D-Gal-(1-&gt;4)-D-Glc + an N-acyl-sphingoid base. The catalysed reaction is a ganglioside Fuc-GM1 + H2O = alpha-Fuc-(1-&gt;2)-beta-Gal-(1-&gt;3)-beta-GalNAc-(1-&gt;4)-[alpha-Neu5Ac-(2-&gt;3)]-beta-Gal-(1-&gt;4)-Glc + an N-acyl-sphingoid base. The enzyme catalyses a beta-D-galactosyl-(1-&gt;4)-beta-D-glucosyl-(1&lt;-&gt;1)-ceramide + H2O = lactose + an N-acyl-sphingoid base. In terms of biological role, hydrolyzes glycosphingolipids; exhibits broad substrate specificity including monosialodihexosylganglioside (GM3), monosialotetrahexosylganglioside (GM1), fucosyl-GM1, lactosylceramide, globotriosylceramide, globotetraosylceramide, ganglioside GD1a, and ganglioside GD1b. No activity towards glucosylceramide and galactosylceramide. The protein is Endoglycoceramidase I of Rhodococcus hoagii (strain 103S) (Rhodococcus equi).